A 374-amino-acid chain; its full sequence is Pectate lyase 1 (374 aa).

Residues 1-22 form the signal peptide; sequence MKYLLPSAAAGLLLLAAQPTMA. Cysteines 93 and 176 form a disulfide. Ca(2+) contacts are provided by aspartate 150, aspartate 152, glutamate 187, and aspartate 191. Arginine 239 is an active-site residue. The cysteines at positions 350 and 373 are disulfide-linked.

Belongs to the polysaccharide lyase 1 family. PLADES subfamily. Ca(2+) is required as a cofactor.

The protein localises to the secreted. It carries out the reaction Eliminative cleavage of (1-&gt;4)-alpha-D-galacturonan to give oligosaccharides with 4-deoxy-alpha-D-galact-4-enuronosyl groups at their non-reducing ends.. It functions in the pathway glycan metabolism; pectin degradation; 2-dehydro-3-deoxy-D-gluconate from pectin: step 2/5. In terms of biological role, involved in maceration and soft-rotting of plant tissue. The polypeptide is Pectate lyase 1 (pel1) (Pectobacterium carotovorum (Erwinia carotovora)).